Here is a 190-residue protein sequence, read N- to C-terminus: Flavodoxin-like domain-containing protein BilS (190 aa).

Its pathway is porphyrin-containing compound metabolism; protoheme degradation. In terms of biological role, together with BilR, catalyzes reduction of mesobilirubin and/or bilirubin to urobilinogen, a key step during heme degradation. BilS is probably involved in electron transfer for the bilirubin reductase BilR. This chain is Flavodoxin-like domain-containing protein BilS, found in Clostridium symbiosum (strain WAL-14163).